The chain runs to 252 residues: Phosphoglycolate phosphatase (252 aa).

Asp-13 acts as the Nucleophile in catalysis. Mg(2+) is bound by residues Asp-13, Asp-15, and Asp-192.

Belongs to the HAD-like hydrolase superfamily. CbbY/CbbZ/Gph/YieH family. Monomer. It depends on Mg(2+) as a cofactor. Chloride is required as a cofactor.

It carries out the reaction 2-phosphoglycolate + H2O = glycolate + phosphate. The protein operates within organic acid metabolism; glycolate biosynthesis; glycolate from 2-phosphoglycolate: step 1/1. In terms of biological role, specifically catalyzes the dephosphorylation of 2-phosphoglycolate. Is involved in the dissimilation of the intracellular 2-phosphoglycolate formed during the DNA repair of 3'-phosphoglycolate ends, a major class of DNA lesions induced by oxidative stress. This is Phosphoglycolate phosphatase from Salmonella typhimurium (strain LT2 / SGSC1412 / ATCC 700720).